Consider the following 257-residue polypeptide: Dihydroorotate dehydrogenase B (NAD(+)), electron transfer subunit (257 aa).

One can recognise an FAD-binding FR-type domain in the interval 2 to 101 (IRQEKMRVVS…LGPIGNGFPV (100 aa)). Residues 52–55 (RPIS), 69–71 (IYR), and 76–77 (GT) each bind FAD. [2Fe-2S] cluster is bound by residues C220, C225, C228, and C244.

The protein belongs to the PyrK family. As to quaternary structure, heterotetramer of 2 PyrK and 2 PyrD type B subunits. [2Fe-2S] cluster serves as cofactor. Requires FAD as cofactor.

It functions in the pathway pyrimidine metabolism; UMP biosynthesis via de novo pathway; orotate from (S)-dihydroorotate (NAD(+) route): step 1/1. Functionally, responsible for channeling the electrons from the oxidation of dihydroorotate from the FMN redox center in the PyrD type B subunit to the ultimate electron acceptor NAD(+). This Lysinibacillus sphaericus (strain C3-41) protein is Dihydroorotate dehydrogenase B (NAD(+)), electron transfer subunit.